Here is an 83-residue protein sequence, read N- to C-terminus: Apolipoprotein C-I, acidic form (83 aa).

The signal sequence occupies residues 1–26; the sequence is MRLFLSLPVLVVVLSMVLEGPAPAQG.

The protein belongs to the apolipoprotein C1 family.

It is found in the secreted. This Pan troglodytes (Chimpanzee) protein is Apolipoprotein C-I, acidic form (APOC1A).